Reading from the N-terminus, the 157-residue chain is Probable succinate transporter subunit YjjB (157 aa).

The next 4 membrane-spanning stretches (helical) occupy residues 10–30 (LAQD…VFNV), 55–75 (AGFN…SIGI), 87–107 (IFTV…TAMI), and 129–149 (FLKA…PGLW).

Belongs to the ThrE exporter (TC 2.A.79) family. The transporter is composed of YjjB and YjjP.

It localises to the cell inner membrane. In terms of biological role, involved in succinate export with YjjP. Both proteins are required for export. Participates in succinate export, but also in the export of other dicarboxylates, such as fumarate and malate. Contributes to succinate production under both aerobic and anaerobic conditions, and increases fumarate and malate production during anaerobic succinate production. This Klebsiella aerogenes (strain ATCC 13048 / DSM 30053 / CCUG 1429 / JCM 1235 / KCTC 2190 / NBRC 13534 / NCIMB 10102 / NCTC 10006 / CDC 819-56) (Enterobacter aerogenes) protein is Probable succinate transporter subunit YjjB.